Here is an 836-residue protein sequence, read N- to C-terminus: Glutamate receptor ionotropic, kainate 1 (836 aa).

Positions 1 to 30 (MERGTVLIQPGLWTRDTSWTLLYFLCYILP) are cleaved as a signal peptide. Over 31 to 561 (QTSPQVLRIG…VFSFLNPLSP (531 aa)) the chain is Extracellular. Residues Asn-68, Asn-74, Asn-276, Asn-379, Asn-413, Asn-424, and Asn-431 are each glycosylated (N-linked (GlcNAc...) asparagine). 3 residues coordinate L-glutamate: Pro-516, Thr-518, and Arg-523. An N-linked (GlcNAc...) asparagine glycan is attached at Asn-546. The chain crosses the membrane as a helical span at residues 562–582 (DIWMYVLLACLGVSCVLFVIA). Residues 583–638 (RFTPYEWYNPHPCNPDSDVVENNFTLLNSFWFGVGALMQQGSELMPKALSTRIVGG) are Cytoplasmic-facing. Residues 639–659 (IWWFFTLIIISSYTANLAAFL) form a helical membrane-spanning segment. The Extracellular portion of the chain corresponds to 660-721 (TVERMESPID…RQPSALGVEN (62 aa)). Residues Ser-689 and Thr-690 each contribute to the L-glutamate site. A helical membrane pass occupies residues 722–742 (IGGIFIVLAAGLVLSVFVAIG). The Cytoplasmic segment spans residues 743–836 (EFIYKSRKNN…RRTQRKETVA (94 aa)).

The protein belongs to the glutamate-gated ion channel (TC 1.A.10.1) family. GRIK1 subfamily. In terms of assembly, homotetramer or heterotetramer of pore-forming glutamate receptor subunits. Tetramers may be formed by the dimerization of dimers. Can form functional heteromeric receptors with GRIK4 and GRIK5. Interacts with KLHL17. In terms of tissue distribution, most abundant in the cerebellum. Also present in the suprachiasmatic nuclei of the hypothalamus.

Its subcellular location is the cell membrane. It is found in the postsynaptic cell membrane. The catalysed reaction is Ca(2+)(in) = Ca(2+)(out). In terms of biological role, ionotropic glutamate receptor that functions as a cation-permeable ligand-gated ion channel, gated by L-glutamate and the glutamatergic agonist kainic acid. L-glutamate acts as an excitatory neurotransmitter at many synapses in the central nervous system. Binding of the excitatory neurotransmitter L-glutamate induces a conformation change, leading to the opening of the cation channel, and thereby converts the chemical signal to an electrical impulse. The receptor then desensitizes rapidly and enters a transient inactive state, characterized by the presence of bound agonist. This Mus musculus (Mouse) protein is Glutamate receptor ionotropic, kainate 1 (Grik1).